A 366-amino-acid chain; its full sequence is Protein-glutamate methylesterase/protein-glutamine glutaminase of group 2 operon (366 aa).

The Response regulatory domain maps to 19–136; that stretch reads RVLIVDDSAM…GQGLPAIMRD (118 aa). Asp70 bears the 4-aspartylphosphate mark. Residues 162 to 356 enclose the CheB-type methylesterase domain; that stretch reads PGASEDWIHA…ARMMLAAAAD (195 aa). Residues Ser175, His201, and Asp298 contribute to the active site.

Belongs to the CheB family. Phosphorylated by CheA. Phosphorylation of the N-terminal regulatory domain activates the methylesterase activity.

The protein resides in the cytoplasm. The catalysed reaction is [protein]-L-glutamate 5-O-methyl ester + H2O = L-glutamyl-[protein] + methanol + H(+). The enzyme catalyses L-glutaminyl-[protein] + H2O = L-glutamyl-[protein] + NH4(+). In terms of biological role, involved in chemotaxis. Part of a chemotaxis signal transduction system that modulates chemotaxis in response to various stimuli. Catalyzes the demethylation of specific methylglutamate residues introduced into the chemoreceptors (methyl-accepting chemotaxis proteins or MCP) by CheR. Also mediates the irreversible deamidation of specific glutamine residues to glutamic acid. In Cereibacter sphaeroides (Rhodobacter sphaeroides), this protein is Protein-glutamate methylesterase/protein-glutamine glutaminase of group 2 operon.